Reading from the N-terminus, the 267-residue chain is Phosphate import ATP-binding protein PstB (267 aa).

The ABC transporter domain maps to valine 21 to isoleucine 262. Residue glycine 53–serine 60 participates in ATP binding.

Belongs to the ABC transporter superfamily. Phosphate importer (TC 3.A.1.7) family. The complex is composed of two ATP-binding proteins (PstB), two transmembrane proteins (PstC and PstA) and a solute-binding protein (PstS).

The protein localises to the cell inner membrane. It carries out the reaction phosphate(out) + ATP + H2O = ADP + 2 phosphate(in) + H(+). In terms of biological role, part of the ABC transporter complex PstSACB involved in phosphate import. Responsible for energy coupling to the transport system. The sequence is that of Phosphate import ATP-binding protein PstB from Xanthomonas oryzae pv. oryzae (strain MAFF 311018).